A 209-amino-acid chain; its full sequence is Uracil phosphoribosyltransferase (209 aa).

5-phospho-alpha-D-ribose 1-diphosphate contacts are provided by residues R79, R104, and 131-139; that span reads DPMLATGGS. Uracil contacts are provided by residues V194 and 199–201; that span reads GDA. D200 serves as a coordination point for 5-phospho-alpha-D-ribose 1-diphosphate.

This sequence belongs to the UPRTase family. Mg(2+) serves as cofactor.

The catalysed reaction is UMP + diphosphate = 5-phospho-alpha-D-ribose 1-diphosphate + uracil. Its pathway is pyrimidine metabolism; UMP biosynthesis via salvage pathway; UMP from uracil: step 1/1. Its activity is regulated as follows. Allosterically activated by GTP. Its function is as follows. Catalyzes the conversion of uracil and 5-phospho-alpha-D-ribose 1-diphosphate (PRPP) to UMP and diphosphate. The protein is Uracil phosphoribosyltransferase of Clostridium botulinum (strain ATCC 19397 / Type A).